Consider the following 303-residue polypeptide: MSAQLTSRLRGYVQVTKPGIIMGNLISVAGGFLLAAQGNVDLTLMFATMIGLSLVVASGCAVNNCIDRDIDAKMQRTRNRVTVTGEISVQAVLSFGIGLGIIGFAMLAIFTNSLAVLFAAIGYVVYVGVYSLYMKRNSVYGTLVGSFSGAVPPVVGYCAVTGQMDMGAVILLLMFSLWQMPHSYAIAIFRFDDYAAANIPVLPVAQGMTKAKLHIVLYIAVFAVVSALLPLAGYTGIAFMAVTFATSLWWLAMALKGYRRDINLQSWARQVFGFSIITITALSVTMALDFQVVAQTPLLTLVP.

A run of 9 helical transmembrane segments spans residues 18 to 38 (PGIIMGNLISVAGGFLLAAQG), 42 to 62 (LTLMFATMIGLSLVVASGCAV), 91 to 111 (AVLSFGIGLGIIGFAMLAIFT), 114 to 134 (LAVLFAAIGYVVYVGVYSLYM), 139 to 159 (VYGTLVGSFSGAVPPVVGYCA), 169 to 189 (VILLLMFSLWQMPHSYAIAIF), 213 to 233 (LHIVLYIAVFAVVSALLPLAG), 235 to 255 (TGIAFMAVTFATSLWWLAMAL), and 274 to 294 (FSIITITALSVTMALDFQVVA).

This sequence belongs to the UbiA prenyltransferase family. Protoheme IX farnesyltransferase subfamily.

The protein resides in the cell inner membrane. The catalysed reaction is heme b + (2E,6E)-farnesyl diphosphate + H2O = Fe(II)-heme o + diphosphate. It participates in porphyrin-containing compound metabolism; heme O biosynthesis; heme O from protoheme: step 1/1. Functionally, converts heme B (protoheme IX) to heme O by substitution of the vinyl group on carbon 2 of heme B porphyrin ring with a hydroxyethyl farnesyl side group. The chain is Protoheme IX farnesyltransferase 1 from Shewanella frigidimarina (strain NCIMB 400).